The chain runs to 278 residues: Secreted RxLR effector protein 151 (278 aa).

Residues methionine 1–cysteine 18 form the signal peptide. Positions arginine 49 to arginine 64 match the RxLR-dEER motif.

The protein belongs to the RxLR effector family.

Its subcellular location is the secreted. The protein localises to the host endoplasmic reticulum membrane. Functionally, secreted effector that completely suppresses the host cell death induced by cell death-inducing proteins. This is Secreted RxLR effector protein 151 from Plasmopara viticola (Downy mildew of grapevine).